Here is a 757-residue protein sequence, read N- to C-terminus: Xaa-Pro dipeptidyl-peptidase (757 aa).

Catalysis depends on charge relay system residues S348, D468, and H498.

It belongs to the peptidase S15 family. As to quaternary structure, homodimer.

It localises to the cytoplasm. It carries out the reaction Hydrolyzes Xaa-Pro-|- bonds to release unblocked, N-terminal dipeptides from substrates including Ala-Pro-|-p-nitroanilide and (sequentially) Tyr-Pro-|-Phe-Pro-|-Gly-Pro-|-Ile.. In terms of biological role, removes N-terminal dipeptides sequentially from polypeptides having unsubstituted N-termini provided that the penultimate residue is proline. This chain is Xaa-Pro dipeptidyl-peptidase, found in Streptococcus pneumoniae (strain P1031).